A 288-amino-acid polypeptide reads, in one-letter code: Bifunctional protein FolD (288 aa).

NADP(+) is bound by residues 163–165, Ser188, and Ile229; that span reads GRS.

The protein belongs to the tetrahydrofolate dehydrogenase/cyclohydrolase family. Homodimer.

The enzyme catalyses (6R)-5,10-methylene-5,6,7,8-tetrahydrofolate + NADP(+) = (6R)-5,10-methenyltetrahydrofolate + NADPH. It catalyses the reaction (6R)-5,10-methenyltetrahydrofolate + H2O = (6R)-10-formyltetrahydrofolate + H(+). Its pathway is one-carbon metabolism; tetrahydrofolate interconversion. Functionally, catalyzes the oxidation of 5,10-methylenetetrahydrofolate to 5,10-methenyltetrahydrofolate and then the hydrolysis of 5,10-methenyltetrahydrofolate to 10-formyltetrahydrofolate. In Campylobacter curvus (strain 525.92), this protein is Bifunctional protein FolD.